The sequence spans 104 residues: Large ribosomal subunit protein uL23 (104 aa).

Belongs to the universal ribosomal protein uL23 family. As to quaternary structure, part of the 50S ribosomal subunit. Contacts protein L29, and trigger factor when it is bound to the ribosome.

In terms of biological role, one of the early assembly proteins it binds 23S rRNA. One of the proteins that surrounds the polypeptide exit tunnel on the outside of the ribosome. Forms the main docking site for trigger factor binding to the ribosome. The polypeptide is Large ribosomal subunit protein uL23 (Polynucleobacter asymbioticus (strain DSM 18221 / CIP 109841 / QLW-P1DMWA-1) (Polynucleobacter necessarius subsp. asymbioticus)).